Consider the following 374-residue polypeptide: Alpha-N-acetylgalactosaminide alpha-2,6-sialyltransferase 2 (374 aa).

Topologically, residues 1–7 (MGLPRGS) are cytoplasmic. A helical; Signal-anchor for type II membrane protein membrane pass occupies residues 8 to 28 (FFWLLLLLTAACSGLLFALYF). Topologically, residues 29–374 (SAVQRYPGPA…KAGILQLYQR (346 aa)) are lumenal. 2 disulfides stabilise this stretch: C66–C148 and C151–C317. N85 and N130 each carry an N-linked (GlcNAc...) asparagine glycan. Residue N156 coordinates CMP-N-acetyl-beta-neuraminate. N161 is a glycosylation site (N-linked (GlcNAc...) asparagine). Residues N179, S304, and H336 each contribute to the CMP-N-acetyl-beta-neuraminate site.

The protein belongs to the glycosyltransferase 29 family. As to expression, expressed in skeletal muscle, heart, kidney, placenta, lung and leukocytes.

It is found in the golgi apparatus membrane. The enzyme catalyses a beta-D-galactosyl-(1-&gt;3)-N-acetyl-alpha-D-galactosaminyl derivative + CMP-N-acetyl-beta-neuraminate = a beta-D-galactosyl-(1-&gt;3)-[N-acetyl-alpha-neuraminyl-(2-&gt;6)]-N-acetyl-alpha-D-galactosaminyl derivative + CMP + H(+). The catalysed reaction is a 3-O-[N-acetyl-alpha-D-galactosaminyl]-L-threonyl-[protein] + CMP-N-acetyl-beta-neuraminate = a 3-O-[N-acetyl-alpha-neuraminosyl-(2-&gt;6)-N-acetyl-alpha-D-galactosaminyl]-L-threonyl-[protein] + CMP + H(+). It catalyses the reaction a 3-O-[N-acetyl-alpha-neuraminyl-(2-&gt;3)-beta-D-galactosyl-(1-&gt;3)-N-acetyl-alpha-D-galactosaminyl]-L-threonyl-[protein] + CMP-N-acetyl-beta-neuraminate = a 3-O-{alpha-Neu5Ac-(2-&gt;3)-beta-D-Gal-(1-&gt;3)-[alpha-Neu5Ac-(2-&gt;6)]-alpha-D-GalNAc}-L-threonyl-[protein] + CMP + H(+). Its pathway is protein modification; protein glycosylation. In terms of biological role, catalyzes the transfer of N-acetylneuraminyl groups onto glycan chains in glycoproteins. Conjugates sialic acid with an alpha-2-6 linkage to N-acetylgalactosamine (GalNAc) glycan chains linked to serine or threonine in glycoproteins. Sialylates alphaGalNAc- and Galbeta1-&gt;3GalNAc-O-Ser/Thr epitopes also known as Tn and T antigens. This Homo sapiens (Human) protein is Alpha-N-acetylgalactosaminide alpha-2,6-sialyltransferase 2 (ST6GALNAC2).